The following is a 240-amino-acid chain: PF03932 family protein CutC (240 aa).

The protein belongs to the CutC family.

Its subcellular location is the cytoplasm. The protein is PF03932 family protein CutC of Xanthomonas campestris pv. campestris (strain 8004).